Here is a 65-residue protein sequence, read N- to C-terminus: Large ribosomal subunit protein bL35 (65 aa).

It belongs to the bacterial ribosomal protein bL35 family.

The chain is Large ribosomal subunit protein bL35 from Thermotoga maritima (strain ATCC 43589 / DSM 3109 / JCM 10099 / NBRC 100826 / MSB8).